The primary structure comprises 133 residues: Ribosome-binding factor A (133 aa).

Belongs to the RbfA family. As to quaternary structure, monomer. Binds 30S ribosomal subunits, but not 50S ribosomal subunits or 70S ribosomes.

Its subcellular location is the cytoplasm. Functionally, one of several proteins that assist in the late maturation steps of the functional core of the 30S ribosomal subunit. Associates with free 30S ribosomal subunits (but not with 30S subunits that are part of 70S ribosomes or polysomes). Required for efficient processing of 16S rRNA. May interact with the 5'-terminal helix region of 16S rRNA. In Cronobacter sakazakii (strain ATCC BAA-894) (Enterobacter sakazakii), this protein is Ribosome-binding factor A.